Reading from the N-terminus, the 378-residue chain is Probable G-protein coupled receptor frpr-1 (378 aa).

A run of 7 helical transmembrane segments spans residues 47–67 (LVVI…GNAL), 85–105 (LFAL…LFFL), 120–140 (AVLS…SVFI), 180–200 (VIVC…YNSP), 243–263 (TIVM…AIVI), 277–297 (IITL…PLTV), and 315–337 (SNLM…GSNF).

This sequence belongs to the G-protein coupled receptor 1 family.

Its subcellular location is the cell membrane. The polypeptide is Probable G-protein coupled receptor frpr-1 (Caenorhabditis elegans).